The following is a 329-amino-acid chain: Delta-aminolevulinic acid dehydratase (329 aa).

Residues cysteine 122, cysteine 124, and cysteine 132 each contribute to the Zn(2+) site. The active-site Schiff-base intermediate with substrate is the lysine 199. 5-aminolevulinate-binding residues include arginine 209 and arginine 221. Lysine 252 (schiff-base intermediate with substrate) is an active-site residue. 5-aminolevulinate is bound by residues serine 279 and tyrosine 318.

It belongs to the ALAD family. As to quaternary structure, homooctamer. Requires Zn(2+) as cofactor.

The catalysed reaction is 2 5-aminolevulinate = porphobilinogen + 2 H2O + H(+). It functions in the pathway porphyrin-containing compound metabolism; protoporphyrin-IX biosynthesis; coproporphyrinogen-III from 5-aminolevulinate: step 1/4. Functionally, catalyzes an early step in the biosynthesis of tetrapyrroles. Binds two molecules of 5-aminolevulinate per subunit, each at a distinct site, and catalyzes their condensation to form porphobilinogen. The sequence is that of Delta-aminolevulinic acid dehydratase (hem2) from Schizosaccharomyces pombe (strain 972 / ATCC 24843) (Fission yeast).